Consider the following 360-residue polypeptide: Histidinol-phosphate aminotransferase 2 (360 aa).

At K218 the chain carries N6-(pyridoxal phosphate)lysine.

This sequence belongs to the class-II pyridoxal-phosphate-dependent aminotransferase family. Histidinol-phosphate aminotransferase subfamily. In terms of assembly, homodimer. Requires pyridoxal 5'-phosphate as cofactor.

It carries out the reaction L-histidinol phosphate + 2-oxoglutarate = 3-(imidazol-4-yl)-2-oxopropyl phosphate + L-glutamate. It participates in amino-acid biosynthesis; L-histidine biosynthesis; L-histidine from 5-phospho-alpha-D-ribose 1-diphosphate: step 7/9. The sequence is that of Histidinol-phosphate aminotransferase 2 from Nitrosococcus oceani (strain ATCC 19707 / BCRC 17464 / JCM 30415 / NCIMB 11848 / C-107).